Consider the following 428-residue polypeptide: Enolase (428 aa).

Gln-162 contacts (2R)-2-phosphoglycerate. The Proton donor role is filled by Glu-204. Positions 241, 283, and 310 each coordinate Mg(2+). (2R)-2-phosphoglycerate contacts are provided by Lys-335, Arg-364, Ser-365, and Lys-386. The active-site Proton acceptor is Lys-335.

The protein belongs to the enolase family. The cofactor is Mg(2+).

The protein resides in the cytoplasm. It is found in the secreted. It localises to the cell surface. The enzyme catalyses (2R)-2-phosphoglycerate = phosphoenolpyruvate + H2O. Its pathway is carbohydrate degradation; glycolysis; pyruvate from D-glyceraldehyde 3-phosphate: step 4/5. Functionally, catalyzes the reversible conversion of 2-phosphoglycerate (2-PG) into phosphoenolpyruvate (PEP). It is essential for the degradation of carbohydrates via glycolysis. The protein is Enolase of Rhodococcus erythropolis (strain PR4 / NBRC 100887).